Reading from the N-terminus, the 224-residue chain is Large ribosomal subunit protein bL25 (224 aa).

The tract at residues 190–224 (EPAPAAEGAAPAEGAAAAAAGGKPAAKTAKPAAKK) is disordered.

Belongs to the bacterial ribosomal protein bL25 family. CTC subfamily. In terms of assembly, part of the 50S ribosomal subunit; part of the 5S rRNA/L5/L18/L25 subcomplex. Contacts the 5S rRNA. Binds to the 5S rRNA independently of L5 and L18.

This is one of the proteins that binds to the 5S RNA in the ribosome where it forms part of the central protuberance. This is Large ribosomal subunit protein bL25 from Variovorax paradoxus (strain S110).